A 215-amino-acid chain; its full sequence is ATP-dependent Clp protease proteolytic subunit (215 aa).

Ser111 acts as the Nucleophile in catalysis. His136 is an active-site residue.

This sequence belongs to the peptidase S14 family. Fourteen ClpP subunits assemble into 2 heptameric rings which stack back to back to give a disk-like structure with a central cavity, resembling the structure of eukaryotic proteasomes.

It localises to the cytoplasm. It catalyses the reaction Hydrolysis of proteins to small peptides in the presence of ATP and magnesium. alpha-casein is the usual test substrate. In the absence of ATP, only oligopeptides shorter than five residues are hydrolyzed (such as succinyl-Leu-Tyr-|-NHMec, and Leu-Tyr-Leu-|-Tyr-Trp, in which cleavage of the -Tyr-|-Leu- and -Tyr-|-Trp bonds also occurs).. Functionally, cleaves peptides in various proteins in a process that requires ATP hydrolysis. Has a chymotrypsin-like activity. Plays a major role in the degradation of misfolded proteins. The sequence is that of ATP-dependent Clp protease proteolytic subunit from Hamiltonella defensa subsp. Acyrthosiphon pisum (strain 5AT).